The sequence spans 490 residues: tRNA-guanine(15) transglycosylase (490 aa).

D92 acts as the Nucleophile in catalysis. Substrate-binding residues include D127 and A195. 3 residues coordinate Zn(2+): C278, C280, and C283.

Belongs to the archaeosine tRNA-ribosyltransferase family. Requires Zn(2+) as cofactor.

The catalysed reaction is guanosine(15) in tRNA + 7-cyano-7-deazaguanine = 7-cyano-7-carbaguanosine(15) in tRNA + guanine. It participates in tRNA modification; archaeosine-tRNA biosynthesis. In terms of biological role, exchanges the guanine residue with 7-cyano-7-deazaguanine (preQ0) at position 15 in the dihydrouridine loop (D-loop) of archaeal tRNAs. This is tRNA-guanine(15) transglycosylase from Haloarcula marismortui (strain ATCC 43049 / DSM 3752 / JCM 8966 / VKM B-1809) (Halobacterium marismortui).